Consider the following 741-residue polypeptide: Photosystem I P700 chlorophyll a apoprotein A2 1 (741 aa).

8 helical membrane-spanning segments follow: residues 46–69 (IFAT…FHVA), 135–158 (LYTG…LHLQ), 175–199 (LNHH…HVAI), 273–291 (IAHH…GHMY), 334–357 (LHFQ…QHMY), 373–399 (AALY…IFLV), 421–443 (AIIS…LYVH), and 524–542 (FLVH…LILV). Cys566 and Cys575 together coordinate [4Fe-4S] cluster. The next 2 membrane-spanning stretches (helical) occupy residues 582–603 (SFYL…YWHW) and 650–672 (LSVW…MFLI). Chlorophyll a is bound by residues His661, Met669, and Tyr677. Residue Trp678 coordinates phylloquinone. A helical transmembrane segment spans residues 714–734 (VVGLAHFTVGYVLTYAAFLIA).

The protein belongs to the PsaA/PsaB family. The PsaA/B heterodimer binds the P700 chlorophyll special pair and subsequent electron acceptors. PSI consists of a core antenna complex that captures photons, and an electron transfer chain that converts photonic excitation into a charge separation. The cyanobacterial PSI reaction center is composed of one copy each of PsaA,B,C,D,E,F,I,J,K,L,M and X, and forms trimeric complexes. It depends on PSI electron transfer chain: 5 chlorophyll a, 1 chlorophyll a', 2 phylloquinones and 3 4Fe-4S clusters. PSI core antenna: 90 chlorophyll a, 22 carotenoids, 3 phospholipids and 1 galactolipid. P700 is a chlorophyll a/chlorophyll a' dimer, A0 is one or more chlorophyll a, A1 is one or both phylloquinones and FX is a shared 4Fe-4S iron-sulfur center. as a cofactor.

The protein resides in the cellular thylakoid membrane. The catalysed reaction is reduced [plastocyanin] + hnu + oxidized [2Fe-2S]-[ferredoxin] = oxidized [plastocyanin] + reduced [2Fe-2S]-[ferredoxin]. Functionally, psaA and PsaB bind P700, the primary electron donor of photosystem I (PSI), as well as the electron acceptors A0, A1 and FX. PSI is a plastocyanin/cytochrome c6-ferredoxin oxidoreductase, converting photonic excitation into a charge separation, which transfers an electron from the donor P700 chlorophyll pair to the spectroscopically characterized acceptors A0, A1, FX, FA and FB in turn. Oxidized P700 is reduced on the lumenal side of the thylakoid membrane by plastocyanin or cytochrome c6. The chain is Photosystem I P700 chlorophyll a apoprotein A2 1 from Trichormus variabilis (strain ATCC 29413 / PCC 7937) (Anabaena variabilis).